Consider the following 381-residue polypeptide: Prokineticin receptor 2 (381 aa).

Residues 1–51 (MGPQNRNTSFAPDLNPPQDHVSLNYSYGDYDLPLGEDEDVTKTQTFFAAKI) lie on the Extracellular side of the membrane. 2 N-linked (GlcNAc...) asparagine glycosylation sites follow: Asn-7 and Asn-24. A helical transmembrane segment spans residues 52–72 (VIGVALAGIMLVCGIGNFVFI). Residues 73 to 86 (AALARYKKLRNLTN) lie on the Cytoplasmic side of the membrane. A helical membrane pass occupies residues 87–107 (LLIANLAISDFLVAIVCCPFE). The Extracellular segment spans residues 108 to 133 (MDYYVVRQLSWAHGHVLCASVNYLRT). Residues Cys-125 and Cys-205 are joined by a disulfide bond. The helical transmembrane segment at 134–154 (VSLYVSTNALLAIAIDRYLAI) threads the bilayer. The Cytoplasmic portion of the chain corresponds to 155–168 (VHPLKPRMNYQTAS). Residues 169–189 (FLIALVWMVSILIAVPSAYFT) traverse the membrane as a helical segment. Over 190–220 (TETILVIVKNQEKIFCGQIWSVDQQLYYKSY) the chain is Extracellular. Residues 221-241 (FLFVFGLEFVGPVVTMTLCYA) form a helical membrane-spanning segment. The Cytoplasmic portion of the chain corresponds to 242–270 (RISQELWFKAVPGFQTEQIRKRLRCRRKT). The chain crosses the membrane as a helical span at residues 271–291 (VLLLMGILTAYVLCWAPFYGF). Over 292 to 310 (TIVRDFFPTVVVKEKHYLT) the chain is Extracellular. Residues 311-331 (AFYVVECIAMSNSMINTICFV) form a helical membrane-spanning segment. Residues 332–381 (TVKNNTMKYFKKMLRLHWRPSHYGSKSSADLDLKTSGVPATEEVDCIRLK) lie on the Cytoplasmic side of the membrane.

This sequence belongs to the G-protein coupled receptor 1 family. Homodimer. As to expression, expressed in several regions of the brain, including paraventricular hypothalamic nucleus, dorsal medial hypothalamic nucleus, paratenial thalamic nuclei, paracentral thalamic nucleus, lateral habenular nucleus, lateral septal nucleus, lateral globus pallidus and amygdala. Highest expression seen in paraventricular thalamic nuclei and is also extensively expressed in the suprachiasmatic nucleus.

It localises to the cell membrane. Receptor for prokineticin 2. Exclusively coupled to the G(q) subclass of heteromeric G proteins. Activation leads to mobilization of calcium, stimulation of phosphoinositide turnover and activation of p44/p42 mitogen-activated protein kinase. The chain is Prokineticin receptor 2 (Prokr2) from Mus musculus (Mouse).